The following is a 226-amino-acid chain: PKHD-type hydroxylase Bpet2704 (226 aa).

The Fe2OG dioxygenase domain maps to 78-178; that stretch reads KIFPPLFNRY…RISAFFWMQS (101 aa). Histidine 96, aspartate 98, and histidine 159 together coordinate Fe cation. Residue arginine 169 coordinates 2-oxoglutarate.

Fe(2+) serves as cofactor. The cofactor is L-ascorbate.

The polypeptide is PKHD-type hydroxylase Bpet2704 (Bordetella petrii (strain ATCC BAA-461 / DSM 12804 / CCUG 43448)).